Reading from the N-terminus, the 590-residue chain is Potassium-transporting ATPase potassium-binding subunit (590 aa).

A run of 12 helical transmembrane segments spans residues 3 to 23, 63 to 83, 134 to 154, 177 to 197, 284 to 304, 312 to 332, 359 to 379, 388 to 408, 411 to 431, 451 to 471, 515 to 535, and 558 to 578; these read AFLL…KPLG, HYAL…YALQ, GLAV…IALI, VYVL…QGVI, FVQM…FGGM, WAVL…LAWA, FGIV…CGAV, ALGG…FGGV, GLYG…LMIG, IAIL…VVVT, LALG…VLAM, and LFVV…YIPA.

The protein belongs to the KdpA family. As to quaternary structure, the system is composed of three essential subunits: KdpA, KdpB and KdpC.

Its subcellular location is the cell inner membrane. Functionally, part of the high-affinity ATP-driven potassium transport (or Kdp) system, which catalyzes the hydrolysis of ATP coupled with the electrogenic transport of potassium into the cytoplasm. This subunit binds the periplasmic potassium ions and delivers the ions to the membrane domain of KdpB through an intramembrane tunnel. The polypeptide is Potassium-transporting ATPase potassium-binding subunit (Ralstonia pickettii (strain 12J)).